The sequence spans 1505 residues: Anaphase-promoting complex subunit 1 (1505 aa).

The protein belongs to the APC1 family. As to quaternary structure, the APC/C complex is probably composed of at least 12 subunits: apc-2, apc-10, apc-11, cdc-26, emb-1, emb-27, emb-30, mat-1, mat-2, mat-3, such-1 and gfi-3.

It participates in protein modification; protein ubiquitination. Its function is as follows. Probable component of the anaphase promoting complex/cyclosome (APC/C), a cell cycle-regulated E3 ubiquitin ligase that controls progression through mitosis and the G1 phase of the cell cycle. The APC/C complex acts by mediating ubiquitination and subsequent degradation of target proteins. Developmental role in early embryogenesis and the metaphase to anaphase transition in oocyte and spermatocyte meiosis and mitosis in germ cells. Required for embryonic anterior-posterior axis formation. Plays a role in regulating the abundance of glr-1 receptors in postmitotic neurons, which may in turn control animal locomotion. Involved in regulating GABA neurotransmitter release at neuromuscular junctions in GABA motor neurons. The chain is Anaphase-promoting complex subunit 1 from Caenorhabditis elegans.